A 232-amino-acid chain; its full sequence is Esterase YpfH (232 aa).

Catalysis depends on charge relay system residues Ser111, Asp159, and His191.

It belongs to the AB hydrolase superfamily. AB hydrolase 2 family.

In terms of biological role, displays esterase activity toward palmitoyl-CoA and pNP-butyrate. The protein is Esterase YpfH (ypfH) of Escherichia coli (strain K12).